The primary structure comprises 348 residues: Mannonate dehydratase (348 aa).

Belongs to the mannonate dehydratase family. It depends on Fe(2+) as a cofactor. Mn(2+) is required as a cofactor.

It carries out the reaction D-mannonate = 2-dehydro-3-deoxy-D-gluconate + H2O. It functions in the pathway carbohydrate metabolism; pentose and glucuronate interconversion. In terms of biological role, catalyzes the dehydration of D-mannonate. This chain is Mannonate dehydratase, found in Streptococcus agalactiae serotype Ia (strain ATCC 27591 / A909 / CDC SS700).